Reading from the N-terminus, the 352-residue chain is Phenylalanine--tRNA ligase alpha subunit (352 aa).

E258 lines the Mg(2+) pocket.

Belongs to the class-II aminoacyl-tRNA synthetase family. Phe-tRNA synthetase alpha subunit type 1 subfamily. In terms of assembly, tetramer of two alpha and two beta subunits. Mg(2+) serves as cofactor.

The protein resides in the cytoplasm. The catalysed reaction is tRNA(Phe) + L-phenylalanine + ATP = L-phenylalanyl-tRNA(Phe) + AMP + diphosphate + H(+). In Staphylococcus aureus (strain Mu3 / ATCC 700698), this protein is Phenylalanine--tRNA ligase alpha subunit.